A 177-amino-acid chain; its full sequence is Large ribosomal subunit protein uL6 (177 aa).

Belongs to the universal ribosomal protein uL6 family. As to quaternary structure, part of the 50S ribosomal subunit.

Functionally, this protein binds to the 23S rRNA, and is important in its secondary structure. It is located near the subunit interface in the base of the L7/L12 stalk, and near the tRNA binding site of the peptidyltransferase center. The polypeptide is Large ribosomal subunit protein uL6 (Erwinia tasmaniensis (strain DSM 17950 / CFBP 7177 / CIP 109463 / NCPPB 4357 / Et1/99)).